A 1556-amino-acid polypeptide reads, in one-letter code: Lysine-specific demethylase 5C (1556 aa).

A JmjN domain is found at 14–55 (CPVFEPSWAEFRDPLGYIAKIRPIAEKSGICKIRPPADWQPP). An ARID domain is found at 79–169 (TRVKLNYLDQ…IVYPYEMYQS (91 aa)). Polar residues predominate over residues 197–207 (LRQSVQPSKFN). The interval 197–227 (LRQSVQPSKFNSYGRRAKRLQPDPEPTEEDI) is disordered. Residues Lys205, Lys229, Lys244, and Lys274 each participate in a glycyl lysine isopeptide (Lys-Gly) (interchain with G-Cter in SUMO2) cross-link. The segment at 257-303 (LRKKDKEGPECPPTVVVKEESGGDVKVESTSPKTFLESKEELSHSPE) is disordered. The segment covering 273–283 (VKEESGGDVKV) has biased composition (basic and acidic residues). Ser287 is subject to Phosphoserine. Residue Lys295 forms a Glycyl lysine isopeptide (Lys-Gly) (interchain with G-Cter in SUMO2) linkage. Residues Ser301 and Ser317 each carry the phosphoserine modification. Residues 324 to 374 (SYVCRMCSRGDEDDKLLLCDGCDDNYHIFCLLPPLPEIPKGVWRCPKCVMA) form a PHD-type 1 zinc finger. Residues 468–634 (EYATSGWNLN…AGRQCIEHYR (167 aa)) enclose the JmjC domain. Fe cation is bound by residues His514, Asp517, and His602. A phosphoserine mark is found at Ser893 and Ser897. Lys1127 participates in a covalent cross-link: Glycyl lysine isopeptide (Lys-Gly) (interchain with G-Cter in SUMO2). The PHD-type 2 zinc finger occupies 1185-1250 (TSVCVCGQVP…KFLCPLCMRS (66 aa)). Disordered stretches follow at residues 1315–1362 (LQAE…SPEK) and 1441–1556 (ERHG…QQQL). Residues 1335-1345 (PLREGSGKDMP) show a composition bias toward basic and acidic residues. At Ser1359 the chain carries Phosphoserine. Basic residues predominate over residues 1445–1460 (SRARGRALERRRRRKV). A compositionally biased stretch (basic and acidic residues) spans 1461–1478 (DRGGEGDDPAREELEPKR). Residues 1485–1500 (EAEEAQEEEELEEETG) are compositionally biased toward acidic residues. 2 stretches are compositionally biased toward polar residues: residues 1513 to 1522 (SPSTQENQNG) and 1530 to 1540 (SGPSAPFSTLS). A compositionally biased stretch (low complexity) spans 1541–1556 (PQLHVPCPQQPPQQQL).

It belongs to the JARID1 histone demethylase family. Part of two distinct complexes, one containing E2F6, and the other containing REST. Interacts with ZMYND8. Fe(2+) serves as cofactor.

It localises to the nucleus. It carries out the reaction N(6),N(6),N(6)-trimethyl-L-lysyl(4)-[histone H3] + 3 2-oxoglutarate + 3 O2 = L-lysyl(4)-[histone H3] + 3 formaldehyde + 3 succinate + 3 CO2. In terms of biological role, histone demethylase that specifically demethylates 'Lys-4' of histone H3, thereby playing a central role in histone code. Does not demethylate histone H3 'Lys-9', H3 'Lys-27', H3 'Lys-36', H3 'Lys-79' or H4 'Lys-20'. Demethylates trimethylated and dimethylated but not monomethylated H3 'Lys-4'. Participates in transcriptional repression of neuronal genes by recruiting histone deacetylases and REST at neuron-restrictive silencer elements. Represses the CLOCK-BMAL1 heterodimer-mediated transcriptional activation of the core clock component PER2. This chain is Lysine-specific demethylase 5C (KDM5C), found in Canis lupus familiaris (Dog).